The following is a 443-amino-acid chain: Exodeoxyribonuclease 7 large subunit (443 aa).

This sequence belongs to the XseA family. Heterooligomer composed of large and small subunits.

It localises to the cytoplasm. The catalysed reaction is Exonucleolytic cleavage in either 5'- to 3'- or 3'- to 5'-direction to yield nucleoside 5'-phosphates.. Bidirectionally degrades single-stranded DNA into large acid-insoluble oligonucleotides, which are then degraded further into small acid-soluble oligonucleotides. This Vibrio campbellii (strain ATCC BAA-1116) protein is Exodeoxyribonuclease 7 large subunit.